A 1755-amino-acid chain; its full sequence is Transposon Ty1-NL1 Gag-Pol polyprotein (1755 aa).

Composition is skewed to polar residues over residues 1–23, 48–60, 71–86, and 131–152; these read MESQQLSQHSPISHGSACASVTS, TKANSQQTTTPAS, SPQTAQSHSPQNGPYQ, and PQYPSSVGTPLSTPSPESGNTF. 3 disordered regions span residues 1–86, 131–171, and 350–420; these read MESQ…GPYQ, PQYP…YVRP, and QQES…IRGS. The segment covering 153 to 165 has biased composition (low complexity); the sequence is TDSSSADSDMTST. Residues 299 to 401 are RNA-binding; that stretch reads NNGIPINNKV…NSQSRTARAH (103 aa). Residues 363 to 372 are compositionally biased toward basic and acidic residues; it reads NPSDEKKDSR. Residues 373–412 show a composition bias toward polar residues; sequence TYTNTTKPKSITRNSQKPNNSQSRTARAHNVSTSNNSSGP. The For protease activity; shared with dimeric partner role is filled by Asp461. The interval 583 to 640 is integrase-type zinc finger-like; it reads NVHTSESTRKYPYPFIHRMLAHANAQTIRYSLKNNTITYFNESDVDWSSAIDYQCPDC. An Integrase catalytic domain is found at 660-835; the sequence is NSYEPFQYLH…AGLDISTLLP (176 aa). Asp671 and Asp736 together coordinate Mg(2+). Disordered regions lie at residues 956 to 1120 and 1146 to 1172; these read SKAV…TCPK and DSFKELPPINSRQTNSSLGGIGDSNAY. Low complexity predominate over residues 960 to 969; the sequence is SPTDSTPPST. Positions 1005-1015 are enriched in polar residues; that stretch reads STPQISDIEST. The segment covering 1038–1053 has biased composition (basic and acidic residues); that stretch reads ESSHTSKSKDFRHSDS. Composition is skewed to polar residues over residues 1054 to 1082 and 1095 to 1106; these read YSDNETNHTNVPISSTGGTNNKTVPQTSE and SIDTSSSESNSL. The Bipartite nuclear localization signal motif lies at 1178-1212; the sequence is KKRSLEDNETEIKVSRDTWNTKNMRSLEPPRSKKR. The 139-residue stretch at 1338 to 1476 folds into the Reverse transcriptase Ty1/copia-type domain; sequence NNYYITQLDI…DILGLEIKYQ (139 aa). The Mg(2+) site is built by Asp1346, Asp1427, Asp1428, Asp1610, Glu1652, and Asp1685. The RNase H Ty1/copia-type domain maps to 1610-1752; it reads DASYGNQPYY…IKTFKLLTNK (143 aa).

As to quaternary structure, the capsid protein forms a homotrimer, from which the VLPs are assembled. The protease is a homodimer, whose active site consists of two apposed aspartic acid residues. Post-translationally, initially, virus-like particles (VLPs) are composed of the structural unprocessed proteins Gag and Gag-Pol, and also contain the host initiator methionine tRNA (tRNA(i)-Met) which serves as a primer for minus-strand DNA synthesis, and a dimer of genomic Ty RNA. Processing of the polyproteins occurs within the particle and proceeds by an ordered pathway, called maturation. First, the protease (PR) is released by autocatalytic cleavage of the Gag-Pol polyprotein yielding capsid protein p45 and a Pol-p154 precursor protein. This cleavage is a prerequisite for subsequent processing of Pol-p154 at the remaining sites to release the mature structural and catalytic proteins. Maturation takes place prior to the RT reaction and is required to produce transposition-competent VLPs.

The protein resides in the cytoplasm. It localises to the nucleus. The enzyme catalyses DNA(n) + a 2'-deoxyribonucleoside 5'-triphosphate = DNA(n+1) + diphosphate. It catalyses the reaction Endonucleolytic cleavage to 5'-phosphomonoester.. Capsid protein (CA) is the structural component of the virus-like particle (VLP), forming the shell that encapsulates the retrotransposons dimeric RNA genome. The particles are assembled from trimer-clustered units and there are holes in the capsid shells that allow for the diffusion of macromolecules. CA also has nucleocapsid-like chaperone activity, promoting primer tRNA(i)-Met annealing to the multipartite primer-binding site (PBS), dimerization of Ty1 RNA and initiation of reverse transcription. Functionally, the aspartyl protease (PR) mediates the proteolytic cleavages of the Gag and Gag-Pol polyproteins after assembly of the VLP. Its function is as follows. Reverse transcriptase/ribonuclease H (RT) is a multifunctional enzyme that catalyzes the conversion of the retro-elements RNA genome into dsDNA within the VLP. The enzyme displays a DNA polymerase activity that can copy either DNA or RNA templates, and a ribonuclease H (RNase H) activity that cleaves the RNA strand of RNA-DNA heteroduplexes during plus-strand synthesis and hydrolyzes RNA primers. The conversion leads to a linear dsDNA copy of the retrotransposon that includes long terminal repeats (LTRs) at both ends. In terms of biological role, integrase (IN) targets the VLP to the nucleus, where a subparticle preintegration complex (PIC) containing at least integrase and the newly synthesized dsDNA copy of the retrotransposon must transit the nuclear membrane. Once in the nucleus, integrase performs the integration of the dsDNA into the host genome. The protein is Transposon Ty1-NL1 Gag-Pol polyprotein (TY1B-NL1) of Saccharomyces cerevisiae (strain ATCC 204508 / S288c) (Baker's yeast).